The primary structure comprises 360 residues: Phosphoserine aminotransferase (360 aa).

R42 serves as a coordination point for L-glutamate. Pyridoxal 5'-phosphate is bound by residues 76 to 77, W102, T152, D172, and Q195; that span reads AS. The residue at position 196 (K196) is an N6-(pyridoxal phosphate)lysine. A pyridoxal 5'-phosphate-binding site is contributed by 237–238; sequence NT.

The protein belongs to the class-V pyridoxal-phosphate-dependent aminotransferase family. SerC subfamily. Homodimer. Requires pyridoxal 5'-phosphate as cofactor.

The protein resides in the cytoplasm. The enzyme catalyses O-phospho-L-serine + 2-oxoglutarate = 3-phosphooxypyruvate + L-glutamate. The catalysed reaction is 4-(phosphooxy)-L-threonine + 2-oxoglutarate = (R)-3-hydroxy-2-oxo-4-phosphooxybutanoate + L-glutamate. The protein operates within amino-acid biosynthesis; L-serine biosynthesis; L-serine from 3-phospho-D-glycerate: step 2/3. In terms of biological role, catalyzes the reversible conversion of 3-phosphohydroxypyruvate to phosphoserine and of 3-hydroxy-2-oxo-4-phosphonooxybutanoate to phosphohydroxythreonine. This Bacillus cereus (strain ATCC 14579 / DSM 31 / CCUG 7414 / JCM 2152 / NBRC 15305 / NCIMB 9373 / NCTC 2599 / NRRL B-3711) protein is Phosphoserine aminotransferase.